The sequence spans 134 residues: Profilin-3 (134 aa).

A disulfide bridge connects residues cysteine 13 and cysteine 118. The short motif at 84 to 100 (AVIRGKKGSGGITIKKT) is the Involved in PIP2 interaction element. Position 114 is a phosphothreonine (threonine 114).

This sequence belongs to the profilin family. Occurs in many kinds of cells as a complex with monomeric actin in a 1:1 ratio. Post-translationally, phosphorylated by MAP kinases.

It is found in the cytoplasm. Its subcellular location is the cytoskeleton. Functionally, binds to actin and affects the structure of the cytoskeleton. At high concentrations, profilin prevents the polymerization of actin, whereas it enhances it at low concentrations. This chain is Profilin-3, found in Olea europaea (Common olive).